The primary structure comprises 758 residues: Probable ubiquitin carboxyl-terminal hydrolase creB (758 aa).

The interval 1-27 is disordered; the sequence is MGSFLRSFRRDVGSSTPSVGATPAKKE. One can recognise a USP domain in the interval 57 to 468; sequence FGMENYGNTC…CAYVLFYQET (412 aa). C66 acts as the Nucleophile in catalysis. Disordered stretches follow at residues 116-148 and 243-268; these read AEAQAEKQRLANAQRPGAPPAQPPKPEDKDSSE and QPIPSLPPADTTDSSRQSISSGSKTP. The segment covering 253–268 has biased composition (polar residues); sequence TTDSSRQSISSGSKTP. The active-site Proton acceptor is H419. Residues 514–744 form a disordered region; that stretch reads IPVQDEPQRH…KGDRAGHGKW (231 aa). The span at 554–563 shows a compositional bias: pro residues; it reads ATPPPVPPIP. The stretch at 573–631 forms a coiled coil; sequence KKSDIQSKKERAKEEKERKAAEKEMEKQRRKEQEARVKENQRREEAELKAALEASKASK. 2 stretches are compositionally biased toward basic and acidic residues: residues 573–650 and 729–740; these read KKSD…DPKR and DALKSPKGDRAG.

This sequence belongs to the peptidase C19 family. In terms of assembly, interacts with creA, creC and qutD.

The enzyme catalyses Thiol-dependent hydrolysis of ester, thioester, amide, peptide and isopeptide bonds formed by the C-terminal Gly of ubiquitin (a 76-residue protein attached to proteins as an intracellular targeting signal).. Ubiquitin thioesterase component of the regulatory network controlling carbon source utilization through ubiquitination and deubiquitination involving creA, creB, creC, creD and acrB. Deubiquitinates the creA catabolic repressor and the quinate permease qutD. Also plays a role in response to carbon starvation and the control of extracellular proteases activity. This Aspergillus niger (strain ATCC MYA-4892 / CBS 513.88 / FGSC A1513) protein is Probable ubiquitin carboxyl-terminal hydrolase creB (creB).